The chain runs to 260 residues: NH(3)-dependent NAD(+) synthetase (260 aa).

31-38 (GLSGGLDS) provides a ligand contact to ATP. D37 serves as a coordination point for Mg(2+). Residue R112 participates in deamido-NAD(+) binding. T132 is an ATP binding site. E137 lines the Mg(2+) pocket. ATP is bound by residues K161 and S183.

It belongs to the NAD synthetase family. As to quaternary structure, homodimer.

The catalysed reaction is deamido-NAD(+) + NH4(+) + ATP = AMP + diphosphate + NAD(+) + H(+). It functions in the pathway cofactor biosynthesis; NAD(+) biosynthesis; NAD(+) from deamido-NAD(+) (ammonia route): step 1/1. Catalyzes the ATP-dependent amidation of deamido-NAD to form NAD. Uses ammonia as a nitrogen source. This is NH(3)-dependent NAD(+) synthetase from Helicobacter pylori (strain HPAG1).